Here is a 581-residue protein sequence, read N- to C-terminus: Probable bifunctional SAT/APS kinase 2 (581 aa).

Residues 1-200 (MSGFVVWFTG…AAGGARGLIA (200 aa)) are adenylsulfate kinase. 10 to 17 (GLSGAGKS) contributes to the ATP binding site. The Phosphoserine intermediate role is filled by serine 84. Residues 201–581 (PHGGELVNRW…ILIESMRSSS (381 aa)) form a sulfate adenylyltransferase region.

The protein in the N-terminal section; belongs to the APS kinase family. It in the C-terminal section; belongs to the sulfate adenylyltransferase family.

It carries out the reaction sulfate + ATP + H(+) = adenosine 5'-phosphosulfate + diphosphate. The catalysed reaction is adenosine 5'-phosphosulfate + ATP = 3'-phosphoadenylyl sulfate + ADP + H(+). The protein operates within sulfur metabolism; hydrogen sulfide biosynthesis; sulfite from sulfate: step 1/3. It functions in the pathway sulfur metabolism; hydrogen sulfide biosynthesis; sulfite from sulfate: step 2/3. This chain is Probable bifunctional SAT/APS kinase 2 (sat2/cysC2), found in Sorangium cellulosum (strain So ce56) (Polyangium cellulosum (strain So ce56)).